The following is a 224-amino-acid chain: Orotate phosphoribosyltransferase (224 aa).

5-phospho-alpha-D-ribose 1-diphosphate-binding positions include Lys26, Tyr73–Lys74, Arg100, Lys101, Lys104, His106, and Glu127–Ser135. Orotate-binding residues include Thr131 and Arg160.

Belongs to the purine/pyrimidine phosphoribosyltransferase family. PyrE subfamily. Homodimer. The cofactor is Mg(2+).

The enzyme catalyses orotidine 5'-phosphate + diphosphate = orotate + 5-phospho-alpha-D-ribose 1-diphosphate. Its pathway is pyrimidine metabolism; UMP biosynthesis via de novo pathway; UMP from orotate: step 1/2. Its function is as follows. Catalyzes the transfer of a ribosyl phosphate group from 5-phosphoribose 1-diphosphate to orotate, leading to the formation of orotidine monophosphate (OMP). This Clostridium acetobutylicum (strain ATCC 824 / DSM 792 / JCM 1419 / IAM 19013 / LMG 5710 / NBRC 13948 / NRRL B-527 / VKM B-1787 / 2291 / W) protein is Orotate phosphoribosyltransferase.